The primary structure comprises 145 residues: Acidic phospholipase A2 (145 aa).

Positions 1 to 21 (MYPAHLLVLLAVCVSLLGAAS) are cleaved as a signal peptide. The propeptide occupies 22-27 (IPPLPL). Intrachain disulfides connect cysteine 38–cysteine 98, cysteine 54–cysteine 144, cysteine 56–cysteine 72, cysteine 71–cysteine 125, cysteine 78–cysteine 118, cysteine 87–cysteine 111, and cysteine 105–cysteine 116. Ca(2+) is bound by residues tyrosine 55 and glycine 57. The active site involves histidine 75. Aspartate 76 provides a ligand contact to Ca(2+). Aspartate 119 is a catalytic residue.

The protein belongs to the phospholipase A2 family. Group I subfamily. D49 sub-subfamily. Ca(2+) serves as cofactor. As to expression, expressed by the venom gland.

It localises to the secreted. The catalysed reaction is a 1,2-diacyl-sn-glycero-3-phosphocholine + H2O = a 1-acyl-sn-glycero-3-phosphocholine + a fatty acid + H(+). Functionally, PLA2 catalyzes the calcium-dependent hydrolysis of the 2-acyl groups in 3-sn-phosphoglycerides. This Notechis scutatus scutatus (Mainland tiger snake) protein is Acidic phospholipase A2.